Here is a 384-residue protein sequence, read N- to C-terminus: 8-amino-7-oxononanoate synthase (384 aa).

R21 provides a ligand contact to substrate. 108–109 (GF) lines the pyridoxal 5'-phosphate pocket. H133 contributes to the substrate binding site. Pyridoxal 5'-phosphate contacts are provided by S179, H207, and T233. K236 is subject to N6-(pyridoxal phosphate)lysine. T352 lines the substrate pocket.

This sequence belongs to the class-II pyridoxal-phosphate-dependent aminotransferase family. BioF subfamily. In terms of assembly, homodimer. Requires pyridoxal 5'-phosphate as cofactor.

It carries out the reaction 6-carboxyhexanoyl-[ACP] + L-alanine + H(+) = (8S)-8-amino-7-oxononanoate + holo-[ACP] + CO2. It participates in cofactor biosynthesis; biotin biosynthesis. Its function is as follows. Catalyzes the decarboxylative condensation of pimeloyl-[acyl-carrier protein] and L-alanine to produce 8-amino-7-oxononanoate (AON), [acyl-carrier protein], and carbon dioxide. This is 8-amino-7-oxononanoate synthase from Citrobacter koseri (strain ATCC BAA-895 / CDC 4225-83 / SGSC4696).